The sequence spans 350 residues: Inositol 2-dehydrogenase/D-chiro-inositol 3-dehydrogenase (350 aa).

The protein belongs to the Gfo/Idh/MocA family. In terms of assembly, homotetramer.

The catalysed reaction is myo-inositol + NAD(+) = scyllo-inosose + NADH + H(+). The enzyme catalyses 1D-chiro-inositol + NAD(+) = scyllo-inosine + NADH + H(+). Its pathway is polyol metabolism; myo-inositol degradation into acetyl-CoA; acetyl-CoA from myo-inositol: step 1/7. In terms of biological role, involved in the oxidation of myo-inositol (MI) and D-chiro-inositol (DCI) to 2-keto-myo-inositol (2KMI or 2-inosose) and 1-keto-D-chiro-inositol (1KDCI), respectively. The polypeptide is Inositol 2-dehydrogenase/D-chiro-inositol 3-dehydrogenase (Lactiplantibacillus plantarum (strain ATCC BAA-793 / NCIMB 8826 / WCFS1) (Lactobacillus plantarum)).